Here is a 144-residue protein sequence, read N- to C-terminus: Cell division protein SepF (144 aa).

Positions 14-31 are enriched in acidic residues; sequence EDDEMNEVPYTESEEQQE. The interval 14 to 41 is disordered; that stretch reads EDDEMNEVPYTESEEQQEEIPQTQKNER.

Belongs to the SepF family. Homodimer. Interacts with FtsZ.

The protein resides in the cytoplasm. In terms of biological role, cell division protein that is part of the divisome complex and is recruited early to the Z-ring. Probably stimulates Z-ring formation, perhaps through the cross-linking of FtsZ protofilaments. Its function overlaps with FtsA. This chain is Cell division protein SepF, found in Lactobacillus johnsonii (strain CNCM I-12250 / La1 / NCC 533).